The following is a 337-amino-acid chain: DNA-directed RNA polymerase subunit alpha (337 aa).

The alpha N-terminal domain (alpha-NTD) stretch occupies residues 1–233 (MIREKVTVST…DLFIPFLHME (233 aa)). The alpha C-terminal domain (alpha-CTD) stretch occupies residues 266-337 (KLALKSIFID…FAIDLPKNQF (72 aa)).

Belongs to the RNA polymerase alpha chain family. In terms of assembly, in plastids the minimal PEP RNA polymerase catalytic core is composed of four subunits: alpha, beta, beta', and beta''. When a (nuclear-encoded) sigma factor is associated with the core the holoenzyme is formed, which can initiate transcription.

The protein resides in the plastid. Its subcellular location is the chloroplast. The enzyme catalyses RNA(n) + a ribonucleoside 5'-triphosphate = RNA(n+1) + diphosphate. DNA-dependent RNA polymerase catalyzes the transcription of DNA into RNA using the four ribonucleoside triphosphates as substrates. In Ipomoea purpurea (Common morning glory), this protein is DNA-directed RNA polymerase subunit alpha.